A 242-amino-acid polypeptide reads, in one-letter code: Type III pantothenate kinase (242 aa).

ATP is bound at residue 7–14; it reads DLGNSRFK. Substrate-binding positions include Tyr91 and 98-101; that span reads GVDR. Asp100 acts as the Proton acceptor in catalysis. An ATP-binding site is contributed by Thr121. Substrate is bound at residue Thr171.

The protein belongs to the type III pantothenate kinase family. Homodimer. NH4(+) is required as a cofactor. K(+) serves as cofactor.

The protein localises to the cytoplasm. The catalysed reaction is (R)-pantothenate + ATP = (R)-4'-phosphopantothenate + ADP + H(+). The protein operates within cofactor biosynthesis; coenzyme A biosynthesis; CoA from (R)-pantothenate: step 1/5. Its function is as follows. Catalyzes the phosphorylation of pantothenate (Pan), the first step in CoA biosynthesis. The sequence is that of Type III pantothenate kinase from Xanthomonas euvesicatoria pv. vesicatoria (strain 85-10) (Xanthomonas campestris pv. vesicatoria).